We begin with the raw amino-acid sequence, 1162 residues long: DNA-directed RNA polymerase subunit beta 1 (1162 aa).

The protein belongs to the RNA polymerase beta chain family. As to quaternary structure, the RNAP catalytic core consists of 2 alpha, 1 beta, 1 beta' and 1 omega subunit. When a sigma factor is associated with the core the holoenzyme is formed, which can initiate transcription.

It carries out the reaction RNA(n) + a ribonucleoside 5'-triphosphate = RNA(n+1) + diphosphate. Functionally, DNA-dependent RNA polymerase catalyzes the transcription of DNA into RNA using the four ribonucleoside triphosphates as substrates. The sequence is that of DNA-directed RNA polymerase subunit beta 1 from Nocardia farcinica (strain IFM 10152).